We begin with the raw amino-acid sequence, 1024 residues long: Beta-galactosidase (1024 aa).

Substrate contacts are provided by Asn103 and Asp202. Residue Asp202 coordinates Na(+). 3 residues coordinate Mg(2+): Glu417, His419, and Glu462. Substrate-binding positions include Glu462 and 538–541; that span reads EYAH. Glu462 acts as the Proton donor in catalysis. Glu538 functions as the Nucleophile in the catalytic mechanism. Asn598 contacts Mg(2+). 2 residues coordinate Na(+): Phe602 and Asn605. Substrate is bound by residues Asn605 and Trp1000.

The protein belongs to the glycosyl hydrolase 2 family. Homotetramer. Mg(2+) is required as a cofactor. Na(+) serves as cofactor.

The catalysed reaction is Hydrolysis of terminal non-reducing beta-D-galactose residues in beta-D-galactosides.. The protein is Beta-galactosidase of Escherichia coli (strain ATCC 8739 / DSM 1576 / NBRC 3972 / NCIMB 8545 / WDCM 00012 / Crooks).